The sequence spans 443 residues: MYVVPPPQRSDSGSNGDLRVYQTWKGSNIFFLQGRFVFGPDVRSLALTICLIAVPVTIFCIFVARKLIDDFSDSWGVSIVAVAVVFTIYDLILLLLTSGRDPGIIPRNAHPPEPETLDGNMDAGAGQTPQLRLPRIKEVQLNGITFKVKYCDTCMLYRPPRCSHCSICNNCVERFDHHCPWVGQCIGMRNYRFFFMFVFSTTLLCIYVFAFCWVYIRKIMESEHTTTWKAMLKTPASIVLIIYTFISMWFVGGLTVFHLYLISTNQTTYENFRYRYDRRSNPHNKGVVNNFKETFFSTIPPSKNDFRAMVQREPPLPPRSVAGGFMSPNMGKANDEIEMGRKAVWADMGPAMSDHGDGKHGNNERLHVKDGELGELSPDIRATVDEQSDRPSMHPRRSSWGRKSGSWDMSPEVMALAARVGEQNQNGGGSSSGSGLVTENRPT.

Transmembrane regions (helical) follow at residues 44 to 64 (SLALTICLIAVPVTIFCIFVA) and 76 to 96 (GVSIVAVAVVFTIYDLILLLL). Residues 149-199 (KYCDTCMLYRPPRCSHCSICNNCVERFDHHCPWVGQCIGMRNYRFFFMFVF) enclose the DHHC domain. The active-site S-palmitoyl cysteine intermediate is the C179. The next 2 helical transmembrane spans lie at 193-213 (FFFMFVFSTTLLCIYVFAFCW) and 237-257 (SIVLIIYTFISMWFVGGLTVF). Phosphoserine is present on residues S327 and S377. Over residues 382-392 (ATVDEQSDRPS) the composition is skewed to basic and acidic residues. Positions 382–443 (ATVDEQSDRP…SGLVTENRPT (62 aa)) are disordered. At S406 the chain carries Phosphoserine.

The protein belongs to the DHHC palmitoyltransferase family.

The protein localises to the cell membrane. It catalyses the reaction L-cysteinyl-[protein] + hexadecanoyl-CoA = S-hexadecanoyl-L-cysteinyl-[protein] + CoA. Palmitoyl acyltransferase. This chain is Probable protein S-acyltransferase 7 (PAT07), found in Arabidopsis thaliana (Mouse-ear cress).